A 487-amino-acid chain; its full sequence is Catalase (487 aa).

Residues M1–S20 form a disordered region. Active-site residues include H54 and N127. Y337 is a binding site for heme.

The protein belongs to the catalase family. Heme is required as a cofactor.

It catalyses the reaction 2 H2O2 = O2 + 2 H2O. Decomposes hydrogen peroxide into water and oxygen; serves to protect cells from the toxic effects of hydrogen peroxide. This chain is Catalase (katA), found in Streptomyces coelicolor (strain ATCC BAA-471 / A3(2) / M145).